The following is a 432-amino-acid chain: UDP-N-acetylmuramate--L-alanine ligase (432 aa).

108 to 114 (GAHGKTS) provides a ligand contact to ATP.

The protein belongs to the MurCDEF family.

It is found in the cytoplasm. The catalysed reaction is UDP-N-acetyl-alpha-D-muramate + L-alanine + ATP = UDP-N-acetyl-alpha-D-muramoyl-L-alanine + ADP + phosphate + H(+). Its pathway is cell wall biogenesis; peptidoglycan biosynthesis. Cell wall formation. The polypeptide is UDP-N-acetylmuramate--L-alanine ligase (Bacillus pumilus (strain SAFR-032)).